Consider the following 58-residue polypeptide: Large ribosomal subunit protein bL32c (58 aa).

This sequence belongs to the bacterial ribosomal protein bL32 family.

The protein resides in the plastid. Its subcellular location is the chloroplast. In Adiantum capillus-veneris (Maidenhair fern), this protein is Large ribosomal subunit protein bL32c (rpl32).